A 1068-amino-acid polypeptide reads, in one-letter code: Integrator complex subunit 3 homolog (1068 aa).

2 disordered regions span residues 916–939 and 1001–1068; these read YPSS…STPS and VGRR…NDSD. A phosphoserine mark is found at Ser1038, Ser1039, Ser1043, and Ser1044.

It belongs to the Integrator subunit 3 family. Belongs to the multiprotein complex Integrator, at least composed of IntS1, IntS2, IntS3, IntS4, omd/IntS5, IntS6, defl/IntS7, IntS8, IntS9, IntS10, IntS11, IntS12, asun/IntS13, IntS14 and IntS15. The core complex associates with protein phosphatase 2A subunits mts/PP2A and Pp2A-29B, to form the Integrator-PP2A (INTAC) complex.

It localises to the nucleus. The protein localises to the cytoplasm. Component of the integrator complex, a multiprotein complex that terminates RNA polymerase II (Pol II) transcription in the promoter-proximal region of genes. The integrator complex provides a quality checkpoint during transcription elongation by driving premature transcription termination of transcripts that are unfavorably configured for transcriptional elongation: the complex terminates transcription by (1) catalyzing dephosphorylation of the C-terminal domain (CTD) of Pol II subunit Polr2A/Rbp1 and Spt5, and (2) degrading the exiting nascent RNA transcript via endonuclease activity. The integrator complex is also involved in the 3'-end processing of the U7 snRNA, and also the spliceosomal snRNAs U1, U2, U4 and U5. The polypeptide is Integrator complex subunit 3 homolog (IntS3) (Drosophila sechellia (Fruit fly)).